The chain runs to 130 residues: Small ribosomal subunit protein uS9 (130 aa).

This sequence belongs to the universal ribosomal protein uS9 family.

In Geobacillus stearothermophilus (Bacillus stearothermophilus), this protein is Small ribosomal subunit protein uS9 (rpsI).